Reading from the N-terminus, the 218-residue chain is Ras-related protein RABA5e (218 aa).

GTP is bound at residue 19 to 26 (GDSAVGKS). The Effector region signature appears at 41–49 (SKATIGVEF). Residues 67–71 (DTAGQ), 125–128 (NKCD), and 155–156 (SA) contribute to the GTP site. 2 S-geranylgeranyl cysteine lipidation sites follow: C214 and C215. Position 215 is a cysteine methyl ester (C215). A propeptide spans 216-218 (SST) (removed in mature form).

Belongs to the small GTPase superfamily. Rab family.

Its subcellular location is the cell membrane. Its function is as follows. Intracellular vesicle trafficking and protein transport. The protein is Ras-related protein RABA5e (RABA5E) of Arabidopsis thaliana (Mouse-ear cress).